Consider the following 173-residue polypeptide: Competence protein C (173 aa).

In terms of biological role, involved in transformation (genetic competence for DNA uptake). In Haemophilus influenzae (strain ATCC 51907 / DSM 11121 / KW20 / Rd), this protein is Competence protein C (comC).